The sequence spans 237 residues: E3 ubiquitin-protein ligase RNF166 (237 aa).

Residues 33–73 form an RING-type zinc finger; the sequence is CPICLEVYHRPVAIGSCGHTFCGECLQPCLQVPSPLCPLCR. 4 residues coordinate Zn(2+): Cys-98, Cys-101, His-113, and Cys-117. The C2HC RNF-type zinc finger occupies 98–117; sequence CRGCNKKVTLAKMRAHISSC. The UIM domain maps to 221–237; that stretch reads DEEAAFQAALALSLSEN.

It localises to the cytoplasm. It catalyses the reaction S-ubiquitinyl-[E2 ubiquitin-conjugating enzyme]-L-cysteine + [acceptor protein]-L-lysine = [E2 ubiquitin-conjugating enzyme]-L-cysteine + N(6)-ubiquitinyl-[acceptor protein]-L-lysine.. Its pathway is protein modification; protein ubiquitination. Its function is as follows. E3 ubiquitin-protein ligase that promotes the ubiquitination of different substrates. In turn, participates in different biological processes including interferon production or autophagy. Plays a role in the activation of RNA virus-induced interferon-beta production by promoting the ubiquitination of TRAF3 and TRAF6. Also plays a role in the early recruitment of autophagy adapters to bacteria. Mediates 'Lys-29' and 'Lys-33'-linked ubiquitination of SQSTM1 leading to xenophagic targeting of bacteria and inhibition of their replication. This is E3 ubiquitin-protein ligase RNF166 (Rnf166) from Mus musculus (Mouse).